The chain runs to 460 residues: tRNA modification GTPase MnmE (460 aa).

(6S)-5-formyl-5,6,7,8-tetrahydrofolate-binding residues include Arg22, Glu87, and Arg126. Residues 222 to 381 enclose the TrmE-type G domain; it reads GLKTAIIGKP…LENTIYNLVF (160 aa). Position 232 (Asn232) interacts with K(+). GTP is bound by residues 232–237, 251–257, and 276–279; these read NVGKSS, TDIPGTT, and DTAG. A Mg(2+)-binding site is contributed by Ser236. Thr251, Ile253, and Thr256 together coordinate K(+). Thr257 is a Mg(2+) binding site. (6S)-5-formyl-5,6,7,8-tetrahydrofolate is bound at residue Lys460.

Belongs to the TRAFAC class TrmE-Era-EngA-EngB-Septin-like GTPase superfamily. TrmE GTPase family. Homodimer. Heterotetramer of two MnmE and two MnmG subunits. It depends on K(+) as a cofactor.

It localises to the cytoplasm. In terms of biological role, exhibits a very high intrinsic GTPase hydrolysis rate. Involved in the addition of a carboxymethylaminomethyl (cmnm) group at the wobble position (U34) of certain tRNAs, forming tRNA-cmnm(5)s(2)U34. In Thermoanaerobacter pseudethanolicus (strain ATCC 33223 / 39E) (Clostridium thermohydrosulfuricum), this protein is tRNA modification GTPase MnmE.